A 260-amino-acid polypeptide reads, in one-letter code: Pro-thyrotropin-releasing hormone (260 aa).

The signal sequence occupies residues 1–24 (MPSIQLPVLLLCLTLSGVCLNGRQ). A disordered region spans residues 72–112 (PQWLSKRQHPGKRYISDPEKRQHPGKRDVEEKASFGDIQKR). A Pyrrolidone carboxylic acid modification is found at glutamine 79. At proline 81 the chain carries Proline amide. Over residues 85–112 (YISDPEKRQHPGKRDVEEKASFGDIQKR) the composition is skewed to basic and acidic residues. Position 93 is a pyrrolidone carboxylic acid (glutamine 93). The residue at position 95 (proline 95) is a Proline amide. Residue glutamine 113 is modified to Pyrrolidone carboxylic acid. Leucine 115 is subject to Leucine amide. Residue glutamine 134 is modified to Pyrrolidone carboxylic acid. Proline 136 is subject to Proline amide. Glutamine 163 carries the pyrrolidone carboxylic acid modification. At proline 165 the chain carries Proline amide. Residues 195–207 (KHQQFGNRDRDSD) are compositionally biased toward basic and acidic residues. Disordered regions lie at residues 195–217 (KHQQ…PCDL) and 238–260 (KEGV…ETEE). The residue at position 246 (glutamine 246) is a Pyrrolidone carboxylic acid. Proline 248 is modified (proline amide).

It belongs to the TRH family.

The protein resides in the secreted. In terms of biological role, functions as a regulator of the biosynthesis of TSH in the anterior pituitary gland and as a neurotransmitter/ neuromodulator in the central and peripheral nervous systems. The polypeptide is Pro-thyrotropin-releasing hormone (TRH) (Gallus gallus (Chicken)).